The primary structure comprises 370 residues: Sensor histidine kinase DesK (370 aa).

The Extracellular segment spans residues 1 to 10 (MIKNHFTFQK). Residues 11–31 (LNGITPYIWTIFFILPFYFIW) form a helical membrane-spanning segment. At 32 to 36 (KSSST) the chain is on the cytoplasmic side. Residues 37–57 (FVIIVGIILTLLFFSVYRFAF) form a helical membrane-spanning segment. Topologically, residues 58 to 70 (VSKGWTIYLWGFL) are extracellular. A helical transmembrane segment spans residues 71–91 (LIGISTASITLFSYIYFAFFI). At 92-103 (AYFIGNIKERVP) the chain is on the cytoplasmic side. The chain crosses the membrane as a helical span at residues 104–124 (FHILYYVHLISAAVAANFSLV). The Extracellular portion of the chain corresponds to 125-128 (LKKE). A helical membrane pass occupies residues 129–149 (FFLTQIPFVVITLISAILLPF). The Cytoplasmic portion of the chain corresponds to 150-370 (SIKSRKERER…LTMAIPNNSK (221 aa)). In terms of domain architecture, Histidine kinase spans 186 to 369 (DLHDTLGQKL…KLTMAIPNNS (184 aa)). At His188 the chain carries Phosphohistidine; by autocatalysis.

It is found in the cell membrane. It catalyses the reaction ATP + protein L-histidine = ADP + protein N-phospho-L-histidine.. Functionally, member of the two-component regulatory system DesR/DesK, responsible for cold induction of the des gene coding for the Delta5 acyl-lipid desaturase. Acts as a sensor of the membrane fluidity. Probably activates DesR by phosphorylation. The polypeptide is Sensor histidine kinase DesK (desK) (Bacillus subtilis (strain 168)).